The chain runs to 320 residues: SUN domain-containing protein 3 (320 aa).

Over 1 to 6 the chain is Nuclear; the sequence is MLTRSW. A helical membrane pass occupies residues 7 to 29; the sequence is KIILSTVFISTFLLVGLLNHQWL. Residues 30–320 lie on the Perinuclear space side of the membrane; it reads KETEFPQKPR…RVHGIPSDYT (291 aa). Residues 63 to 102 are a coiled coil; that stretch reads KEQQELLKKESQTLENNFREILFLIEQIDVLKALLKDMKD. The SUN domain occupies 156–317; that stretch reads GASVIEAGTS…YRFRVHGIPS (162 aa).

Self-associates. Interacts with SYNE1 and SPAG4/SUN4. Proposed to form a spermatogenesis-specific LINC complex with SYNE1 during sperm head formation possibly implicating a SUN domain-based heterotrimer with SPAG4/SUN4 associating with SYNE1. Can interact with SYNE3; the interaction is questioned by missing colocalization in spermatids. As to expression, specifically expressed in testis (at protein level).

The protein resides in the membrane. It localises to the nucleus envelope. It is found in the nucleus inner membrane. As a probable component of the LINC (LInker of Nucleoskeleton and Cytoskeleton) complex, involved in the connection between the nuclear lamina and the cytoskeleton. The nucleocytoplasmic interactions established by the LINC complex play an important role in the transmission of mechanical forces across the nuclear envelope and in nuclear movement and positioning. May be involved in nuclear remodeling during sperm head formation in spermatogenesis. A probable SUN3:SYNE1 LINC complex may tether spermatid nuclei to posterior cytoskeletal structures such as the manchette. The chain is SUN domain-containing protein 3 (Sun3) from Mus musculus (Mouse).